A 514-amino-acid chain; its full sequence is L-Threonine dehydratase biosynthetic IlvA (514 aa).

The residue at position 62 (K62) is an N6-(pyridoxal phosphate)lysine. Pyridoxal 5'-phosphate contacts are provided by residues N89, 188-192 (GGGGL), and S315. ACT-like domains are found at residues 339–411 (ALLA…DLSD) and 434–504 (RLYS…DESN).

Belongs to the serine/threonine dehydratase family. In terms of assembly, homotetramer. Pyridoxal 5'-phosphate is required as a cofactor.

The enzyme catalyses L-threonine = 2-oxobutanoate + NH4(+). It functions in the pathway amino-acid biosynthesis; L-isoleucine biosynthesis; 2-oxobutanoate from L-threonine: step 1/1. Isoleucine allosterically inhibits whereas valine allosterically activates this enzyme. Functionally, catalyzes the anaerobic formation of alpha-ketobutyrate and ammonia from threonine in a two-step reaction. The first step involved a dehydration of threonine and a production of enamine intermediates (aminocrotonate), which tautomerizes to its imine form (iminobutyrate). Both intermediates are unstable and short-lived. The second step is the nonenzymatic hydrolysis of the enamine/imine intermediates to form 2-ketobutyrate and free ammonia. In the low water environment of the cell, the second step is accelerated by RidA. This chain is L-Threonine dehydratase biosynthetic IlvA (ilvA), found in Salmonella typhimurium (strain LT2 / SGSC1412 / ATCC 700720).